The chain runs to 314 residues: Putative gluconeogenesis factor (314 aa).

It belongs to the gluconeogenesis factor family.

It is found in the cytoplasm. Required for morphogenesis under gluconeogenic growth conditions. The sequence is that of Putative gluconeogenesis factor from Thermotoga maritima (strain ATCC 43589 / DSM 3109 / JCM 10099 / NBRC 100826 / MSB8).